The primary structure comprises 597 residues: Bromodomain-containing protein 9 (597 aa).

Residues 1–10 show a composition bias toward basic residues; that stretch reads MGKKHKKHKA. Disordered regions lie at residues 1–25 and 38–138; these read MGKK…KPLE and EVTE…ENES. Basic and acidic residues-rich tracts occupy residues 11–25 and 50–62; these read EWRS…KPLE and SYYD…ERER. Phosphoserine is present on S56. Residues 63 to 73 show a composition bias toward basic residues; the sequence is HKEKKKKKKKK. Residues 74–85 are compositionally biased toward basic and acidic residues; it reads SEKEKHLDDEER. Residues 86–97 show a composition bias toward basic residues; it reads RKRKEEKKRKRE. The segment covering 111 to 126 has biased composition (basic and acidic residues); the sequence is DPGKKVEVEPPPDRPV. Residues 136 to 240 enclose the Bromo domain; that stretch reads NESTPIQQLL…HAGFKMMSKQ (105 aa). Residues 214 to 216 are histone H4K5ac H4K8ac and histone H4K5bu H4K8bu binding; that stretch reads TYN. Position 373 is an N6-acetyllysine; alternate (K373). K373 is covalently cross-linked (Glycyl lysine isopeptide (Lys-Gly) (interchain with G-Cter in SUMO2); alternate). The tract at residues 536 to 597 is disordered; sequence EAQAERGGSR…SPEPAASAKT (62 aa). Positions 544–556 are enriched in low complexity; it reads SRPSSNLSSLSNA. 2 positions are modified to phosphoserine: S566 and S588.

In terms of assembly, binds acetylated histones H3 and H4. Binds butyrylated histone H4. Component of the multiprotein chromatin-remodeling subcomplex SWI/SNF called GBAF, which includes at least BICRA or BICRAL (mutually exclusive), BRD9, SS18, the core BAF subunits, SMARCA2/BRM, SMARCA4/BRG1/BAF190A, ACTL6A/BAF53, SMARCC1/BAF155, and SMARCD1/BAF60A. Interacts (via N-terminal bromodomain) with acetylated RAD54. Interacts (via C-terminus) with RAD51.

Its subcellular location is the nucleus. Plays a role in chromatin remodeling and regulation of transcription. Acts as a chromatin reader that recognizes and binds acylated histones: binds histones that are acetylated and/or butyrylated. Component of SWI/SNF chromatin remodeling subcomplex GBAF that carries out key enzymatic activities, changing chromatin structure by altering DNA-histone contacts within a nucleosome in an ATP-dependent manner. Also orchestrates the RAD51-RAD54 complex formation and thereby plays a role in homologous recombination (HR). In Homo sapiens (Human), this protein is Bromodomain-containing protein 9 (BRD9).